A 131-amino-acid chain; its full sequence is Profilin-6 (131 aa).

A disulfide bridge links Cys-13 with Cys-115. The short motif at 81–97 is the Involved in PIP2 interaction element; that stretch reads VVIRGKKGAGGITIKKT. Position 111 is a phosphothreonine (Thr-111).

This sequence belongs to the profilin family. In terms of assembly, occurs in many kinds of cells as a complex with monomeric actin in a 1:1 ratio. In terms of processing, phosphorylated by MAP kinases.

The protein localises to the cytoplasm. It localises to the cytoskeleton. Functionally, binds to actin and affects the structure of the cytoskeleton. At high concentrations, profilin prevents the polymerization of actin, whereas it enhances it at low concentrations. This is Profilin-6 from Corylus avellana (European hazel).